We begin with the raw amino-acid sequence, 1126 residues long: Translation initiation factor IF-2 (1126 aa).

The tract at residues 63–519 is disordered; it reads LSINKPSIKK…TTRQRQKRRA (457 aa). Residues 70–83 are compositionally biased toward basic and acidic residues; the sequence is IKKDNFKQNKEDKS. Residues 93–111 show a composition bias toward low complexity; the sequence is PLKNNSNKKPLLIKPLNKP. Residues 116–151 show a composition bias toward polar residues; sequence KISNQLQNPNKPNIVNSSQSRANLTNTNSKPSQNFN. Positions 161-171 are enriched in pro residues; the sequence is TPPPIKSPAKP. Polar residues predominate over residues 181–195; the sequence is NINNNVKSSESSQNI. Composition is skewed to low complexity over residues 211–224 and 240–252; these read NTNK…NNRK and IINP…NKQN. A compositionally biased stretch (polar residues) spans 254–264; that stretch reads AFKQTASNRPG. Low complexity-rich tracts occupy residues 291-315 and 327-349; these read NRQG…GLRN and NRQG…NRPG. The span at 429 to 443 shows a compositional bias: basic and acidic residues; that stretch reads GKTDWDDSAKLEALR. Residues 501–517 show a composition bias toward basic residues; the sequence is KQFKKKKKETTRQRQKR. Residues 618–790 enclose the tr-type G domain; that stretch reads RRPPVITVMG…ILLVSDVEDL (173 aa). A G1 region spans residues 627-634; that stretch reads GHVDHGKT. 627–634 lines the GTP pocket; sequence GHVDHGKT. Residues 652–656 form a G2 region; the sequence is GITQH. The interval 677–680 is G3; the sequence is DTPG. GTP is bound by residues 677–681 and 731–734; these read DTPGH and NKID. The G4 stretch occupies residues 731 to 734; it reads NKID. A G5 region spans residues 767–769; sequence SAI.

Belongs to the TRAFAC class translation factor GTPase superfamily. Classic translation factor GTPase family. IF-2 subfamily.

The protein resides in the cytoplasm. Functionally, one of the essential components for the initiation of protein synthesis. Protects formylmethionyl-tRNA from spontaneous hydrolysis and promotes its binding to the 30S ribosomal subunits. Also involved in the hydrolysis of GTP during the formation of the 70S ribosomal complex. The chain is Translation initiation factor IF-2 from Prochlorococcus marinus (strain AS9601).